The chain runs to 118 residues: MFNLNQTKKASLPIKMRIRKGDTVQVINGKEKGKTGEVLKTLPIENRVIVQGINLRTRHVKPTQEGESGRIVTEEASLHASNVMVYSTKQKTASRVEVFIDKDGSKKRRLKKTGELID.

The protein belongs to the universal ribosomal protein uL24 family. In terms of assembly, part of the 50S ribosomal subunit.

One of two assembly initiator proteins, it binds directly to the 5'-end of the 23S rRNA, where it nucleates assembly of the 50S subunit. In terms of biological role, one of the proteins that surrounds the polypeptide exit tunnel on the outside of the subunit. This Prochlorococcus marinus (strain SARG / CCMP1375 / SS120) protein is Large ribosomal subunit protein uL24.